Here is a 67-residue protein sequence, read N- to C-terminus: Conotoxin Cp1.1 (67 aa).

The first 26 residues, 1-26, serve as a signal peptide directing secretion; that stretch reads MMFRLTSVSCFLLVIACLNLFQVVLT. 4 disulfides stabilise this stretch: Cys29-Cys43, Cys36-Cys48, Cys42-Cys52, and Cys47-Cys56. Position 60 is a tyrosine amide (Tyr60). The propeptide occupies 64-67; sequence ATFQ.

It belongs to the conotoxin I2 superfamily. As to expression, expressed by the venom duct.

It localises to the secreted. The chain is Conotoxin Cp1.1 from Conus capitaneus (Captain cone).